The following is a 340-amino-acid chain: ATP-dependent 6-phosphofructokinase (340 aa).

Gly11 contributes to the ATP binding site. Residue 21 to 25 (RAVVR) coordinates ADP. ATP contacts are provided by residues 72-73 (RY) and 102-105 (GDGS). Position 103 (Asp103) interacts with Mg(2+). A substrate-binding site is contributed by 125–127 (TID). Residue Asp127 is the Proton acceptor of the active site. Position 154 (Arg154) interacts with ADP. Residues Arg162 and 169–171 (MGR) contribute to the substrate site. Residues 185 to 187 (GAD), Lys211, and 213 to 215 (KNH) contribute to the ADP site. Residues Glu222, Arg244, and 250-253 (HIQR) each bind substrate.

The protein belongs to the phosphofructokinase type A (PFKA) family. ATP-dependent PFK group I subfamily. Prokaryotic clade 'B1' sub-subfamily. In terms of assembly, homotetramer. It depends on Mg(2+) as a cofactor.

It is found in the cytoplasm. The catalysed reaction is beta-D-fructose 6-phosphate + ATP = beta-D-fructose 1,6-bisphosphate + ADP + H(+). Its pathway is carbohydrate degradation; glycolysis; D-glyceraldehyde 3-phosphate and glycerone phosphate from D-glucose: step 3/4. Its activity is regulated as follows. Allosterically activated by ADP and other diphosphonucleosides, and allosterically inhibited by phosphoenolpyruvate. Functionally, catalyzes the phosphorylation of D-fructose 6-phosphate to fructose 1,6-bisphosphate by ATP, the first committing step of glycolysis. In Lactococcus lactis subsp. lactis (Streptococcus lactis), this protein is ATP-dependent 6-phosphofructokinase.